Consider the following 211-residue polypeptide: MRNIQIALTKGRLEKHVIPLFEQIGIDCSELKNKGRKLVFQSKNTDISFILVKAVDVATYVEHGVADIGVVGKDVLMENEKDIYEMLDLGVGVCKFCVASIPTYNPKSYRKKRIATKYPHITSNYFHDKGEDVEIIKIEGSVEIAPILGLVDAIVDIVETGKTLQENGLIVFEEMYSISARMIVNKAALKTKKDEIFSIINVMEQEILSGK.

This sequence belongs to the ATP phosphoribosyltransferase family. Short subfamily. As to quaternary structure, heteromultimer composed of HisG and HisZ subunits.

It localises to the cytoplasm. It catalyses the reaction 1-(5-phospho-beta-D-ribosyl)-ATP + diphosphate = 5-phospho-alpha-D-ribose 1-diphosphate + ATP. Its pathway is amino-acid biosynthesis; L-histidine biosynthesis; L-histidine from 5-phospho-alpha-D-ribose 1-diphosphate: step 1/9. Catalyzes the condensation of ATP and 5-phosphoribose 1-diphosphate to form N'-(5'-phosphoribosyl)-ATP (PR-ATP). Has a crucial role in the pathway because the rate of histidine biosynthesis seems to be controlled primarily by regulation of HisG enzymatic activity. This Bacillus cereus (strain ATCC 10987 / NRS 248) protein is ATP phosphoribosyltransferase.